A 388-amino-acid polypeptide reads, in one-letter code: Succinate--CoA ligase [ADP-forming] subunit beta (388 aa).

The 236-residue stretch at 9 to 244 folds into the ATP-grasp domain; it reads KEILRKFGVA…LDEEDPAEIE (236 aa). ATP contacts are provided by residues Lys-46, 53-55, Glu-99, Ala-102, and Glu-107; that span reads GRG. Mg(2+) contacts are provided by Asn-199 and Asp-213. Substrate contacts are provided by residues Asn-264 and 321–323; that span reads GIM.

The protein belongs to the succinate/malate CoA ligase beta subunit family. Heterotetramer of two alpha and two beta subunits. Requires Mg(2+) as cofactor.

It carries out the reaction succinate + ATP + CoA = succinyl-CoA + ADP + phosphate. The enzyme catalyses GTP + succinate + CoA = succinyl-CoA + GDP + phosphate. The protein operates within carbohydrate metabolism; tricarboxylic acid cycle; succinate from succinyl-CoA (ligase route): step 1/1. Its function is as follows. Succinyl-CoA synthetase functions in the citric acid cycle (TCA), coupling the hydrolysis of succinyl-CoA to the synthesis of either ATP or GTP and thus represents the only step of substrate-level phosphorylation in the TCA. The beta subunit provides nucleotide specificity of the enzyme and binds the substrate succinate, while the binding sites for coenzyme A and phosphate are found in the alpha subunit. This Burkholderia thailandensis (strain ATCC 700388 / DSM 13276 / CCUG 48851 / CIP 106301 / E264) protein is Succinate--CoA ligase [ADP-forming] subunit beta.